A 132-amino-acid chain; its full sequence is Small ribosomal subunit protein uS11 (132 aa).

Belongs to the universal ribosomal protein uS11 family. As to quaternary structure, part of the 30S ribosomal subunit. Interacts with proteins S7 and S18. Binds to IF-3.

Functionally, located on the platform of the 30S subunit, it bridges several disparate RNA helices of the 16S rRNA. Forms part of the Shine-Dalgarno cleft in the 70S ribosome. This Chlamydia muridarum (strain MoPn / Nigg) protein is Small ribosomal subunit protein uS11.